The sequence spans 223 residues: uncharacterized protein (223 aa).

Over residues 1–11 (MLWVQRKRRRK) the composition is skewed to basic residues. Residues 1-37 (MLWVQRKRRRKETSECPSDKDKSPESHKAKNESWIKS) form a disordered region. Positions 12–37 (ETSECPSDKDKSPESHKAKNESWIKS) are enriched in basic and acidic residues. S43 carries the phosphoserine modification. Disordered stretches follow at residues 49–73 (LDNNASASGNATQTESGSEEVSSTV) and 196–223 (THTFYGHSHHSHHGHPSHQSHSLPNRRH). The span at 51–61 (NNASASGNATQ) shows a compositional bias: polar residues. The span at 62 to 73 (TESGSEEVSSTV) shows a compositional bias: low complexity. The span at 202–223 (HSHHSHHGHPSHQSHSLPNRRH) shows a compositional bias: basic residues.

This is an uncharacterized protein from Homo sapiens (Human).